The primary structure comprises 393 residues: Methylthioribose kinase (393 aa).

ATP-binding positions include Asn38, Lys53, and 107–109; that span reads EDL. Asp225 is a substrate binding site. 242–244 provides a ligand contact to ATP; the sequence is DPE. Arg332 is a substrate binding site.

This sequence belongs to the methylthioribose kinase family. As to quaternary structure, homodimer.

The enzyme catalyses 5-(methylsulfanyl)-D-ribose + ATP = 5-(methylsulfanyl)-alpha-D-ribose 1-phosphate + ADP + H(+). Its pathway is amino-acid biosynthesis; L-methionine biosynthesis via salvage pathway; S-methyl-5-thio-alpha-D-ribose 1-phosphate from S-methyl-5'-thioadenosine (hydrolase route): step 2/2. Functionally, catalyzes the phosphorylation of methylthioribose into methylthioribose-1-phosphate. The polypeptide is Methylthioribose kinase (Bacillus cereus (strain ZK / E33L)).